The chain runs to 275 residues: NH(3)-dependent NAD(+) synthetase (275 aa).

46–53 (GISGGQDS) is an ATP binding site. A Mg(2+)-binding site is contributed by aspartate 52. Residue arginine 140 participates in deamido-NAD(+) binding. An ATP-binding site is contributed by threonine 160. Glutamate 165 provides a ligand contact to Mg(2+). The deamido-NAD(+) site is built by lysine 173 and aspartate 180. ATP-binding residues include lysine 189 and threonine 211. Residue 260 to 261 (HK) participates in deamido-NAD(+) binding.

Belongs to the NAD synthetase family. In terms of assembly, homodimer.

It catalyses the reaction deamido-NAD(+) + NH4(+) + ATP = AMP + diphosphate + NAD(+) + H(+). Its pathway is cofactor biosynthesis; NAD(+) biosynthesis; NAD(+) from deamido-NAD(+) (ammonia route): step 1/1. Catalyzes the ATP-dependent amidation of deamido-NAD to form NAD. Uses ammonia as a nitrogen source. This is NH(3)-dependent NAD(+) synthetase from Shigella dysenteriae serotype 1 (strain Sd197).